The primary structure comprises 905 residues: MTSPLRFEADMSMIEGEKLSPIKIPPSRLSTNTTSPDILAKHPHGLSAKQDARRNTVHNETPKGLTATPLTKKAEPLYSVNKRIPLTSPRATNQPNLDSLKKSKTKLDARLYELKSSSRHGSPSNKENMHNSGKSTQASQLSSDVNSSISHKSPFESSPSKIDTPIKQINSSFAKNVKSSPPKSSPSKADKRSIEDDSVIENSRKIAKVITNANESEVSHHKSDDEHSIQIDQVFNKEDLVGRFSSGASPAKLHEPTVIDEDSDGDIYNNEVNTSHTMTSKMRGNESTQLSRIIKITDEVDYVTPQRYTEPVAKSPEINQQHRIKENVINNTESKETISPLKNHMLSVNSDQKENHVSSNRMEDENSDGFNELEDEPTINFLLSPNSKPVFSLDHIKKVQDDHFKEVANLEEVINNKNQEILKFSEELSATNNKFLIYDQKIKELKQDKKKLIANENLLLIQLKHNERELASMTKALRIKENTVTQLESRLSKSKSKYESTANELESVIEEGNTLREQIKRLEKSVEDKSISQKEYESQIKILNDEIKEKDTEISSLTDANIDYNIKVENLLSEKEELLTETGRLGRENNGLEEINSKQQELLEELDKLENLAKDKIMTLENTLDSKTQEIKQVMTEKNELLTKIDNLTEENKNSGRELQQYKDDVEELTNKLNNYNNARSDLDDKINRLQEGLNKSNEANESLQNKVSGLLEEIERLNQHVSESETQMDLLKSINTEKDEIISGDTKKMGELVQKVNKQKQVIADYEKDYSKALEDIKSLQSKGENTSLNDEIEDLKKQVSQGQAKTNARIQEVAEQLYFEYSKKHELKVNQVRASFKKQIDNLHFEKKSQARDIDSLQKKLEIVNMEKNQLLRLIDEYQSGSDHNPKKKLSPKKSGIKKPSRY.

The segment at K18–I200 is disordered. The segment covering S99–E113 has biased composition (basic and acidic residues). Positions R119–A174 are enriched in polar residues. The segment covering K178–S187 has biased composition (low complexity). 2 coiled-coil regions span residues Q400–A810 and N844–S882. Residues E879 to Y905 are disordered. Residues P888 to Y905 are compositionally biased toward basic residues.

Belongs to the ATG23 family.

Its subcellular location is the cytoplasm. The protein resides in the membrane. Functionally, required for cytoplasm to vacuole transport (Cvt) vesicle formation and efficient autophagy. Plays a role in ATG protein retrieval from the pre-autophagosomal structure (PAS) and is especially required for autophagy-dependent cycling of ATG9. Also plays a role in regulation of filamentous growth. The chain is Autophagy-related protein 23 (ATG23) from Debaryomyces hansenii (strain ATCC 36239 / CBS 767 / BCRC 21394 / JCM 1990 / NBRC 0083 / IGC 2968) (Yeast).